We begin with the raw amino-acid sequence, 169 residues long: Lipoprotein signal peptidase (169 aa).

Helical transmembrane passes span 59-79 (PTVL…YVIW) and 84-104 (TTLF…NMID). Residues Asp-113 and Asp-139 contribute to the active site. Residues 132–152 (WPIFNIADSAITIGACMLMIF) form a helical membrane-spanning segment.

It belongs to the peptidase A8 family.

It is found in the cell inner membrane. It carries out the reaction Release of signal peptides from bacterial membrane prolipoproteins. Hydrolyzes -Xaa-Yaa-Zaa-|-(S,diacylglyceryl)Cys-, in which Xaa is hydrophobic (preferably Leu), and Yaa (Ala or Ser) and Zaa (Gly or Ala) have small, neutral side chains.. Its pathway is protein modification; lipoprotein biosynthesis (signal peptide cleavage). Its function is as follows. This protein specifically catalyzes the removal of signal peptides from prolipoproteins. The polypeptide is Lipoprotein signal peptidase (Pelodictyon phaeoclathratiforme (strain DSM 5477 / BU-1)).